Consider the following 257-residue polypeptide: Trans-aconitate 2-methyltransferase (257 aa).

This sequence belongs to the methyltransferase superfamily. Tam family.

The protein resides in the cytoplasm. It carries out the reaction trans-aconitate + S-adenosyl-L-methionine = (E)-3-(methoxycarbonyl)pent-2-enedioate + S-adenosyl-L-homocysteine. In terms of biological role, catalyzes the S-adenosylmethionine monomethyl esterification of trans-aconitate. This chain is Trans-aconitate 2-methyltransferase, found in Rhizobium meliloti (strain 1021) (Ensifer meliloti).